A 1279-amino-acid chain; its full sequence is ATP-dependent helicase/nuclease subunit A (1279 aa).

The UvrD-like helicase ATP-binding domain maps to 4-499 (TKWTDEQRQA…VKLFKNFRSR (496 aa)). 25–32 (AGAGAGKT) lines the ATP pocket. The UvrD-like helicase C-terminal domain occupies 526–853 (EEALKVGASY…RIMSIHKSKG (328 aa)).

This sequence belongs to the helicase family. AddA subfamily. As to quaternary structure, heterodimer of AddA and AddB/RexB. Requires Mg(2+) as cofactor.

It catalyses the reaction Couples ATP hydrolysis with the unwinding of duplex DNA by translocating in the 3'-5' direction.. It carries out the reaction ATP + H2O = ADP + phosphate + H(+). Functionally, the heterodimer acts as both an ATP-dependent DNA helicase and an ATP-dependent, dual-direction single-stranded exonuclease. Recognizes the chi site generating a DNA molecule suitable for the initiation of homologous recombination. The AddA nuclease domain is required for chi fragment generation; this subunit has the helicase and 3' -&gt; 5' nuclease activities. This Clostridium botulinum (strain ATCC 19397 / Type A) protein is ATP-dependent helicase/nuclease subunit A.